A 61-amino-acid chain; its full sequence is Photosystem II reaction center protein K (61 aa).

The propeptide occupies 1-24; the sequence is MLNIFSLICICLHSTLYSSSFFLA. Residues 36–56 form a helical membrane-spanning segment; that stretch reads IVDFMPVIPLLFFLLAFVWQA.

Belongs to the PsbK family. As to quaternary structure, PSII is composed of 1 copy each of membrane proteins PsbA, PsbB, PsbC, PsbD, PsbE, PsbF, PsbH, PsbI, PsbJ, PsbK, PsbL, PsbM, PsbT, PsbX, PsbY, PsbZ, Psb30/Ycf12, at least 3 peripheral proteins of the oxygen-evolving complex and a large number of cofactors. It forms dimeric complexes.

The protein localises to the plastid. Its subcellular location is the chloroplast thylakoid membrane. Functionally, one of the components of the core complex of photosystem II (PSII). PSII is a light-driven water:plastoquinone oxidoreductase that uses light energy to abstract electrons from H(2)O, generating O(2) and a proton gradient subsequently used for ATP formation. It consists of a core antenna complex that captures photons, and an electron transfer chain that converts photonic excitation into a charge separation. The sequence is that of Photosystem II reaction center protein K from Eucalyptus globulus subsp. globulus (Tasmanian blue gum).